We begin with the raw amino-acid sequence, 151 residues long: Protein SprT-like (151 aa).

Positions 6–147 (LQRMVENLSE…GHCNGKLRMK (142 aa)) constitute a SprT-like domain. His67 serves as a coordination point for Zn(2+). Residue Glu68 is part of the active site. Zn(2+) is bound at residue His71.

The protein belongs to the SprT family. It depends on Zn(2+) as a cofactor.

The protein localises to the cytoplasm. The polypeptide is Protein SprT-like (Staphylococcus aureus (strain MRSA252)).